Reading from the N-terminus, the 220-residue chain is Imidazoleglycerol-phosphate dehydratase (220 aa).

Substrate-binding positions include E14, 64–72 (HMIHALAKH), 90–94 (HHTTE), R116, and R138. Residues H64, H90, H91, and E94 each contribute to the Mn(2+) site. Positions 162, 186, 187, and 190 each coordinate Mn(2+). Residues 186–194 (HHRSESAFK) and 214–216 (STK) contribute to the substrate site.

Belongs to the imidazoleglycerol-phosphate dehydratase family. The cofactor is Mn(2+).

It catalyses the reaction D-erythro-1-(imidazol-4-yl)glycerol 3-phosphate = 3-(imidazol-4-yl)-2-oxopropyl phosphate + H2O. It participates in amino-acid biosynthesis; L-histidine biosynthesis; L-histidine from 5-phospho-alpha-D-ribose 1-diphosphate: step 6/9. In Saccharomyces cerevisiae (strain ATCC 204508 / S288c) (Baker's yeast), this protein is Imidazoleglycerol-phosphate dehydratase.